A 148-amino-acid chain; its full sequence is Nucleoside diphosphate kinase (148 aa).

Positions 9, 57, 85, 91, 102, and 112 each coordinate ATP. His115 functions as the Pros-phosphohistidine intermediate in the catalytic mechanism.

This sequence belongs to the NDK family. In terms of assembly, homotetramer. Requires Mg(2+) as cofactor.

The protein localises to the cytoplasm. It catalyses the reaction a 2'-deoxyribonucleoside 5'-diphosphate + ATP = a 2'-deoxyribonucleoside 5'-triphosphate + ADP. The enzyme catalyses a ribonucleoside 5'-diphosphate + ATP = a ribonucleoside 5'-triphosphate + ADP. Major role in the synthesis of nucleoside triphosphates other than ATP. The ATP gamma phosphate is transferred to the NDP beta phosphate via a ping-pong mechanism, using a phosphorylated active-site intermediate. The chain is Nucleoside diphosphate kinase from Macrococcus caseolyticus (strain JCSC5402) (Macrococcoides caseolyticum).